Here is a 1035-residue protein sequence, read N- to C-terminus: Isoleucine--tRNA ligase (1035 aa).

Residues 48–58 carry the 'HIGH' region motif; it reads PTANGRPHVGH. The 'KMSKS' region motif lies at 589–593; sequence KMSKH. Residue Lys-592 coordinates ATP.

This sequence belongs to the class-I aminoacyl-tRNA synthetase family. IleS type 2 subfamily. As to quaternary structure, monomer. The cofactor is Zn(2+).

The protein localises to the cytoplasm. The catalysed reaction is tRNA(Ile) + L-isoleucine + ATP = L-isoleucyl-tRNA(Ile) + AMP + diphosphate. Catalyzes the attachment of isoleucine to tRNA(Ile). As IleRS can inadvertently accommodate and process structurally similar amino acids such as valine, to avoid such errors it has two additional distinct tRNA(Ile)-dependent editing activities. One activity is designated as 'pretransfer' editing and involves the hydrolysis of activated Val-AMP. The other activity is designated 'posttransfer' editing and involves deacylation of mischarged Val-tRNA(Ile). This Clostridium acetobutylicum (strain ATCC 824 / DSM 792 / JCM 1419 / IAM 19013 / LMG 5710 / NBRC 13948 / NRRL B-527 / VKM B-1787 / 2291 / W) protein is Isoleucine--tRNA ligase.